The chain runs to 558 residues: Serine/threonine-protein phosphatase 2B catalytic subunit (558 aa).

Fe cation contacts are provided by Asp-128, His-130, and Asp-156. Zn(2+)-binding residues include Asp-156 and Asn-188. The Proton donor role is filled by His-189. The Zn(2+) site is built by His-237 and His-319. Disordered regions lie at residues 415 to 439 and 534 to 558; these read LRED…NQDP and ALER…LSTS. The segment covering 420 to 435 has biased composition (low complexity); sequence ATTSPGSASPALPSAA. The segment covering 534 to 548 has biased composition (basic and acidic residues); sequence ALERATREADNDKKL. Over residues 549–558 the composition is skewed to polar residues; it reads QTLSRRLSTS.

Belongs to the PPP phosphatase family. PP-2B subfamily. Composed of two components (A and B), the A component is the catalytic subunit and the B component confers calcium sensitivity. Fe(3+) serves as cofactor. The cofactor is Zn(2+).

The enzyme catalyses O-phospho-L-seryl-[protein] + H2O = L-seryl-[protein] + phosphate. It carries out the reaction O-phospho-L-threonyl-[protein] + H2O = L-threonyl-[protein] + phosphate. In terms of biological role, calcium-dependent, calmodulin-stimulated protein phosphatase. This subunit may have a role in the calmodulin activation of calcineurin. In Neurospora crassa (strain ATCC 24698 / 74-OR23-1A / CBS 708.71 / DSM 1257 / FGSC 987), this protein is Serine/threonine-protein phosphatase 2B catalytic subunit (cna-1).